A 311-amino-acid chain; its full sequence is Porphobilinogen deaminase (311 aa).

Cysteine 243 is modified (S-(dipyrrolylmethanemethyl)cysteine).

The protein belongs to the HMBS family. In terms of assembly, monomer. It depends on dipyrromethane as a cofactor.

The enzyme catalyses 4 porphobilinogen + H2O = hydroxymethylbilane + 4 NH4(+). It participates in porphyrin-containing compound metabolism; protoporphyrin-IX biosynthesis; coproporphyrinogen-III from 5-aminolevulinate: step 2/4. Tetrapolymerization of the monopyrrole PBG into the hydroxymethylbilane pre-uroporphyrinogen in several discrete steps. The protein is Porphobilinogen deaminase of Aliivibrio fischeri (strain ATCC 700601 / ES114) (Vibrio fischeri).